The primary structure comprises 896 residues: MADTTVDKLATEVGKSTERLVEQFSQAGIKKSASDTVSETEKQQLLDFLKKQHGGDAAPTKMTLQRKSVSTLSVAGSGGQSKDVKVEVRKKRTFVKRDEAAEAELAAAAKAEEAKAAEAEAKAKAEAEAKAKVDAEAKVKAKAEAEAKAKAKVQTEKPAAETAEDKAAKAEEAKLLAAQDAVAKAKANEEASAAADEARRLAEENEKRWAEEEKARKEAEKSVDHHVTTSTEARAAEDTADANAEKRGRRPRKPSANAGNNANANAGAGKPGGKGKRGKDNRRDNRNSRNSRNTRSVAPESMDHAFTKPAAVVKAEVSIGETVSVAELASKMSIKATEIIKQMMKMGSMVTINQVLDQETAQLVAEEMGHKVILTRENELEHQVLADRNGDVKVEPRAPVVTIMGHVDHGKTSLLDYIRRAKVASGEAGGITQHIGAYHVETENGMITFLDTPGHAAFTAMRARGAKATDIVILVVAADDGVMPQTIEAIQHAKAGGVPLIVAVNKIDKPEADPDRVKSELSQHGVMSEDWGGNNMFVHVSAKDGTGIDELLEGILLEAEVLELQAVREGMAAGVVVESKLDKGRGPVATVLVQEGTLKQGDIVLCGLEYGKVRAMRDENGKAITEAGPSIPVEILGLSGVPSAGDEATVVRDERKAREVALYRQGKFRDVKLARQQKSKLENMFANMVEGEVQELNLVLKADVQGSLEAIADSLNSLSTDEVKVNIIARGVGGLTETDATLAAASNAIMVGFNVRADAQARKVVDSESVDLRYYSIIYQLIDEVRDAMSGMLAPEFKQEIIGLAEVRDVFKSPKIGAIAGCMVTEGTIKRSAPIRVLRDNIVIYEGELESLRRFKDDVSDVRNGMECGIGVKNYNDVRVGDQIEVFETVEIARTL.

Basic and acidic residues predominate over residues 117 to 174; the sequence is AEAEAKAKAEAEAKAKVDAEAKVKAKAEAEAKAKAKVQTEKPAAETAEDKAAKAEEAK. A disordered region spans residues 117-303; that stretch reads AEAEAKAKAE…TRSVAPESMD (187 aa). Residues 175 to 195 show a composition bias toward low complexity; sequence LLAAQDAVAKAKANEEASAAA. Residues 196–227 show a composition bias toward basic and acidic residues; it reads DEARRLAEENEKRWAEEEKARKEAEKSVDHHV. Over residues 254–268 the composition is skewed to low complexity; the sequence is PSANAGNNANANAGA. A tr-type G domain is found at 396-563; it reads PRAPVVTIMG…GILLEAEVLE (168 aa). The interval 405-412 is G1; the sequence is GHVDHGKT. 405-412 is a GTP binding site; that stretch reads GHVDHGKT. The segment at 430 to 434 is G2; sequence GITQH. The interval 451 to 454 is G3; that stretch reads DTPG. Residues 451-455 and 505-508 contribute to the GTP site; these read DTPGH and NKID. The segment at 505–508 is G4; the sequence is NKID. The tract at residues 541–543 is G5; that stretch reads SAK.

This sequence belongs to the TRAFAC class translation factor GTPase superfamily. Classic translation factor GTPase family. IF-2 subfamily.

The protein resides in the cytoplasm. Functionally, one of the essential components for the initiation of protein synthesis. Protects formylmethionyl-tRNA from spontaneous hydrolysis and promotes its binding to the 30S ribosomal subunits. Also involved in the hydrolysis of GTP during the formation of the 70S ribosomal complex. The polypeptide is Translation initiation factor IF-2 (Shewanella pealeana (strain ATCC 700345 / ANG-SQ1)).